We begin with the raw amino-acid sequence, 214 residues long: Proteasome subunit beta (214 aa).

The propeptide at 1 to 11 (MLDTSQEIMKG) is removed in mature form; by autocatalysis. Thr12 (nucleophile) is an active-site residue.

This sequence belongs to the peptidase T1B family. In terms of assembly, the 20S proteasome core is composed of 14 alpha and 14 beta subunits that assemble into four stacked heptameric rings, resulting in a barrel-shaped structure. The two inner rings, each composed of seven catalytic beta subunits, are sandwiched by two outer rings, each composed of seven alpha subunits. The catalytic chamber with the active sites is on the inside of the barrel. Has a gated structure, the ends of the cylinder being occluded by the N-termini of the alpha-subunits. Is capped at one or both ends by the proteasome regulatory ATPase, PAN.

Its subcellular location is the cytoplasm. It catalyses the reaction Cleavage of peptide bonds with very broad specificity.. Its activity is regulated as follows. The formation of the proteasomal ATPase PAN-20S proteasome complex, via the docking of the C-termini of PAN into the intersubunit pockets in the alpha-rings, triggers opening of the gate for substrate entry. Interconversion between the open-gate and close-gate conformations leads to a dynamic regulation of the 20S proteasome proteolysis activity. Functionally, component of the proteasome core, a large protease complex with broad specificity involved in protein degradation. The chain is Proteasome subunit beta from Methanoculleus marisnigri (strain ATCC 35101 / DSM 1498 / JR1).